The sequence spans 308 residues: HTH-type transcriptional activator AllS (308 aa).

Positions 2-59 (FDPETLRTFISVAETGSFSKAAERLCKTTATTSYRIKLLEENTGVGLFFRTTRSVSLT) constitute an HTH lysR-type domain. The segment at residues 19-38 (FSKAAERLCKTTATTSYRIK) is a DNA-binding region (H-T-H motif).

The protein belongs to the LysR transcriptional regulatory family.

In terms of biological role, positive regulator essential for the expression of allD operon. Binds to the allD promoter. The polypeptide is HTH-type transcriptional activator AllS (allS) (Salmonella typhi).